A 33-amino-acid polypeptide reads, in one-letter code: Glucagon-2 (33 aa).

The protein belongs to the glucagon family.

The protein localises to the secreted. In terms of biological role, promotes hydrolysis of glycogen and lipids, and raises the blood sugar level. The sequence is that of Glucagon-2 (gcg2) from Oreochromis niloticus (Nile tilapia).